The following is a 359-amino-acid chain: DNA polymerase IV (359 aa).

Residues 7-188 form the UmuC domain; that stretch reads IIHIDMDAFY…LPIGKFFGVG (182 aa). 2 residues coordinate Mg(2+): Asp11 and Asp106. Residue Glu107 is part of the active site.

Belongs to the DNA polymerase type-Y family. As to quaternary structure, monomer. It depends on Mg(2+) as a cofactor.

Its subcellular location is the cytoplasm. It catalyses the reaction DNA(n) + a 2'-deoxyribonucleoside 5'-triphosphate = DNA(n+1) + diphosphate. In terms of biological role, poorly processive, error-prone DNA polymerase involved in untargeted mutagenesis. Copies undamaged DNA at stalled replication forks, which arise in vivo from mismatched or misaligned primer ends. These misaligned primers can be extended by PolIV. Exhibits no 3'-5' exonuclease (proofreading) activity. May be involved in translesional synthesis, in conjunction with the beta clamp from PolIII. This Clostridium perfringens (strain 13 / Type A) protein is DNA polymerase IV.